The chain runs to 295 residues: Nucleotide-binding protein Lxx11490 (295 aa).

Position 19–26 (19–26 (GMSGAGRS)) interacts with ATP. Residue 70–73 (DVRG) participates in GTP binding.

This sequence belongs to the RapZ-like family.

Its function is as follows. Displays ATPase and GTPase activities. In Leifsonia xyli subsp. xyli (strain CTCB07), this protein is Nucleotide-binding protein Lxx11490.